A 70-amino-acid polypeptide reads, in one-letter code: Large ribosomal subunit protein bL31 (70 aa).

Cys-16, Cys-18, Cys-37, and Cys-40 together coordinate Zn(2+).

Belongs to the bacterial ribosomal protein bL31 family. Type A subfamily. As to quaternary structure, part of the 50S ribosomal subunit. Zn(2+) is required as a cofactor.

Binds the 23S rRNA. This chain is Large ribosomal subunit protein bL31, found in Shewanella halifaxensis (strain HAW-EB4).